Reading from the N-terminus, the 347-residue chain is Aspartate carbamoyltransferase catalytic subunit (347 aa).

Residues Arg75 and Thr76 each contribute to the carbamoyl phosphate site. Lys103 is an L-aspartate binding site. Carbamoyl phosphate-binding residues include Arg125, His153, and Gln156. Positions 193 and 247 each coordinate L-aspartate. Residues Gly288 and Pro289 each contribute to the carbamoyl phosphate site.

The protein belongs to the aspartate/ornithine carbamoyltransferase superfamily. ATCase family. In terms of assembly, heterododecamer (2C3:3R2) of six catalytic PyrB chains organized as two trimers (C3), and six regulatory PyrI chains organized as three dimers (R2).

The enzyme catalyses carbamoyl phosphate + L-aspartate = N-carbamoyl-L-aspartate + phosphate + H(+). The protein operates within pyrimidine metabolism; UMP biosynthesis via de novo pathway; (S)-dihydroorotate from bicarbonate: step 2/3. Functionally, catalyzes the condensation of carbamoyl phosphate and aspartate to form carbamoyl aspartate and inorganic phosphate, the committed step in the de novo pyrimidine nucleotide biosynthesis pathway. The protein is Aspartate carbamoyltransferase catalytic subunit of Erythrobacter litoralis (strain HTCC2594).